The following is a 182-amino-acid chain: Large ribosomal subunit protein uL5 (182 aa).

The protein belongs to the universal ribosomal protein uL5 family. Part of the 50S ribosomal subunit; part of the 5S rRNA/L5/L18/L25 subcomplex. Contacts the 5S rRNA and the P site tRNA. Forms a bridge to the 30S subunit in the 70S ribosome.

Functionally, this is one of the proteins that bind and probably mediate the attachment of the 5S RNA into the large ribosomal subunit, where it forms part of the central protuberance. In the 70S ribosome it contacts protein S13 of the 30S subunit (bridge B1b), connecting the 2 subunits; this bridge is implicated in subunit movement. Contacts the P site tRNA; the 5S rRNA and some of its associated proteins might help stabilize positioning of ribosome-bound tRNAs. This Borreliella burgdorferi (strain ATCC 35210 / DSM 4680 / CIP 102532 / B31) (Borrelia burgdorferi) protein is Large ribosomal subunit protein uL5.